A 3739-amino-acid chain; its full sequence is Cardiomyopathy-associated protein 5 (3739 aa).

Disordered regions lie at residues 1 to 205, 268 to 814, 835 to 884, 967 to 1270, 1288 to 1313, 1325 to 1637, 1650 to 1969, 1986 to 2016, 2065 to 2246, 2273 to 2318, 2377 to 2498, 2513 to 2532, and 2579 to 2616; these read MESG…PPIT, SLEP…SAFV, VSVS…AIQS, LSED…SDVP, TQASLEPEAEDLVPPPTSGWEKRDAK, SSAL…NLVS, EMNR…EKGK, SSIPDSKVSDNEDLETRPGPSVEKAVPAIEP, FLSN…WETR, AVGE…LALD, VYPE…SAVE, KKQETWSDRPTVHTFQTSKD, and SADGVPPMGGTAQEPEGTSVKDEEFSVTSKPAGLSEDQ. The segment covering 18-47 has biased composition (acidic residues); sequence ADEEVAQELETEEESEGEGEETAAESEEEP. Residues 48–62 show a composition bias toward basic and acidic residues; the sequence is DARLSDEDEEGKTKQ. The segment covering 84 to 106 has biased composition (polar residues); that stretch reads TWETNSSRSSTPWASGESQTSGI. Residues 130–153 show a composition bias toward basic residues; that stretch reads RTRKRTQKSKRGSPSLRRKGSKKR. Serine 155 bears the Phosphoserine mark. Polar residues-rich tracts occupy residues 156–175 and 325–336; these read LESQDVLTNQEDGPSISESP and ADSNLNVPSSTE. Residues 380–406 adopt a coiled-coil conformation; it reads ATMVLERAKEELEQNAQGKESSEDDAS. Basic and acidic residues-rich tracts occupy residues 479 to 637, 644 to 663, and 670 to 730; these read IVHR…REEE, SIVHREEEHAPEPIVHREEE, and SIVH…ERGV. A run of 2 repeats spans residues 482-493 and 494-505. Positions 482-720 are 20 X 12 AA approximate tandem repeats of R-[DE]-[EK]-[EG]-H-[AV]-P-E-[PS]-[IM]-V-[HLR]; the sequence is REEEHAPEPI…EEHAPEPMVH (239 aa). One copy of the 3; approximate repeat lies at 506–519; it reads REEEHAPEPESIVH. Repeat unit 4 spans residues 520–531; the sequence is REEEHAPESIVH. The 5; approximate repeat unit spans residues 532 to 545; that stretch reads REEEHAPEPVPIVH. One copy of the 6; approximate repeat lies at 546-559; sequence REEEHAPEPESIVH. Tandem repeats lie at residues 560–571, 572–583, 584–595, and 596–607. An 11; approximate repeat occupies 608-621; sequence REEEHVPEPESIVR. The stretch at 622–633 is one 12; approximate repeat; sequence KGEEHAPEPIVH. A 14; approximate repeat occupies 634-647; sequence REEEQVPEPESIVH. Residues 648-659 form repeat 15; it reads REEEHAPEPIVH. The 16; approximate repeat unit spans residues 660 to 673; it reads REEEQVPEPESIVH. Repeat copies occupy residues 674–685, 686–696, 697–708, and 709–720. Residues 740 to 756 are compositionally biased toward acidic residues; that stretch reads TEPEDSSLEEEIIELDY. Residue serine 850 is modified to Phosphoserine. Composition is skewed to polar residues over residues 861 to 884 and 1151 to 1161; these read PAMTSVSEQSLSPSTTEKTSAIQS and CLTSPSEQTVL. Composition is skewed to basic and acidic residues over residues 1188–1197 and 1230–1242; these read AETEQNKVEP and EHSEPSQEREESS. Residues 1337 to 1351 are compositionally biased toward polar residues; it reads TSVLPTSQPSVSPES. Composition is skewed to basic and acidic residues over residues 1441 to 1460 and 1476 to 1486; these read LEQRMLSKNEPEVAKPHSPP and TEVKQESKITR. Residues 1522–1540 show a composition bias toward polar residues; the sequence is ASSSATTVPVTKLDSNSTK. Composition is skewed to basic and acidic residues over residues 1620–1631, 1697–1706, 1726–1742, 1760–1770, 1786–1803, and 1836–1850; these read NDKHEEITRSPD, IDSRDRDRSL, GPAELQRRGKEQEENRK, IEQKEPKRTLH, DKPELGVKQLAEKKENLE, and EKPDGLVNQHEDRKP. The span at 1854–1863 shows a compositional bias: polar residues; the sequence is QLESSESTDL. 4 stretches are compositionally biased toward basic and acidic residues: residues 1874–1885, 1896–1916, 1992–2001, and 2153–2165; these read DTDHTSETRNQE, LSQEPRRVQSKAVDDSEEGRK, KVSDNEDLET, and ARKEEPSSDHKET. The span at 2181–2190 shows a compositional bias: polar residues; that stretch reads KSAQSAFTRM. Position 2192 is a phosphoserine (serine 2192). Composition is skewed to basic and acidic residues over residues 2212-2244, 2279-2299, 2306-2318, 2377-2419, and 2429-2448; these read GEDRLRQEMPKPTSLEHCEEEVERPTEEKDGWE, RMPESRPFKLEESKAAERLEQ, KLMEKPSKTLALD, VYPE…ETDG, and ELEKSGESRVDLKEERRRFV. Position 2411 is a phosphoserine (serine 2411). Serine 2495 bears the Phosphoserine mark. The segment covering 2513–2523 has biased composition (basic and acidic residues); sequence KKQETWSDRPT. The stretch at 2640–2664 forms a coiled coil; it reads SVDQEESEQMQDKLQYLEEKASFKS. Disordered stretches follow at residues 2667 to 2725, 2742 to 2773, 2791 to 2835, 2881 to 2959, 3027 to 3047, and 3111 to 3174; these read VHDE…QPTV, LSPGSGKQKSTVEESSEEATKTLTSFPESSAE, GPEK…GMPL, EKNE…EREI, LESEPSSQGNEAGNASPDVNL, and PEEP…QKEP. Residues 2682–2709 are compositionally biased toward basic and acidic residues; sequence SKLEVPDRKITSLKENKTKETHKTKEEI. A required for RYR2 clustering region spans residues 2731–3041; sequence YFEKYTLIDY…SSQGNEAGNA (311 aa). A compositionally biased stretch (polar residues) spans 2762–2773; sequence KTLTSFPESSAE. 2 stretches are compositionally biased toward basic and acidic residues: residues 2791–2804 and 2812–2828; these read GPEKDDSKLSHAEM and KPDDRNAPKGISRDVDS. At serine 2905 the chain carries Phosphoserine. The span at 2918 to 2929 shows a compositional bias: basic and acidic residues; that stretch reads YILKDDILHDES. The segment covering 3030–3047 has biased composition (polar residues); the sequence is EPSSQGNEAGNASPDVNL. The span at 3153-3162 shows a compositional bias: basic and acidic residues; the sequence is VWDRTEDQSA. The tract at residues 3187–3214 is amphipathic helix H1; sequence KSLVSEMDKALDIHKDHEVSALDTAISA. The tract at residues 3215–3342 is B-box coiled-coil; BBC; it reads VKVQLGEFLE…ERLLSAMEST (128 aa). Positions 3244-3323 form a coiled coil; it reads FNTIEEKCSK…REAEELDETV (80 aa). The interval 3301–3318 is amphipathic helix H2; sequence SMDTAKDTLETIVREAEE. Fibronectin type-III domains lie at 3374–3475 and 3476–3568; these read VPQP…TAPS and TPVI…TRGT. The tract at residues 3421-3437 is amphipathic helix H3; sequence EINELVEEYRLTVKESC. The B30.2/SPRY domain maps to 3550–3735; it reads NASGTSEQSE…LHLGLEPPDS (186 aa).

As to quaternary structure, interacts with PRKAR2A. Interacts with ACTN2, DES and DTNBP1/dysbindin. Interacts with DMD/dystrophin. Interacts with the calcineurin catalytic subunit PPP3CA. Interacts with TTN. Interacts with CAPN3; this interaction, which results in CMYA5 proteolysis, may protect CAPN3 from autolysis. Interacts with FSD2. In cardiac muscles, identified in a complex composed of FSD2, CMYA5 and RYR2. Post-translationally, phosphorylated by PKA. Expressed in skin as well as in cardiac muscle. Expressed in skeletal muscle (at protein level).

The protein resides in the nucleus. It localises to the cytoplasm. It is found in the perinuclear region. The protein localises to the myofibril. Its subcellular location is the sarcomere. The protein resides in the m line. It localises to the sarcoplasmic reticulum. In terms of biological role, may serve as an anchoring protein that mediates the subcellular compartmentation of protein kinase A (PKA) via binding to PRKAR2A. May attenuate calcineurin ability to induce slow-fiber gene program in muscle and may negatively modulate skeletal muscle regeneration. Plays a role in the assembly of ryanodine receptor (RYR2) clusters in striated muscle. This Mus musculus (Mouse) protein is Cardiomyopathy-associated protein 5 (Cmya5).